A 257-amino-acid polypeptide reads, in one-letter code: Pyridoxine 5'-phosphate synthase (257 aa).

N6 serves as a coordination point for 3-amino-2-oxopropyl phosphate. 8-9 is a 1-deoxy-D-xylulose 5-phosphate binding site; that stretch reads DH. R17 contacts 3-amino-2-oxopropyl phosphate. The active-site Proton acceptor is the H41. 1-deoxy-D-xylulose 5-phosphate-binding residues include R43 and H48. The Proton acceptor role is filled by E68. Position 98 (T98) interacts with 1-deoxy-D-xylulose 5-phosphate. The active-site Proton donor is H210. 3-amino-2-oxopropyl phosphate-binding positions include G211 and 232–233; that span reads GQ.

This sequence belongs to the PNP synthase family. In terms of assembly, homooctamer; tetramer of dimers.

Its subcellular location is the cytoplasm. It carries out the reaction 3-amino-2-oxopropyl phosphate + 1-deoxy-D-xylulose 5-phosphate = pyridoxine 5'-phosphate + phosphate + 2 H2O + H(+). Its pathway is cofactor biosynthesis; pyridoxine 5'-phosphate biosynthesis; pyridoxine 5'-phosphate from D-erythrose 4-phosphate: step 5/5. In terms of biological role, catalyzes the complicated ring closure reaction between the two acyclic compounds 1-deoxy-D-xylulose-5-phosphate (DXP) and 3-amino-2-oxopropyl phosphate (1-amino-acetone-3-phosphate or AAP) to form pyridoxine 5'-phosphate (PNP) and inorganic phosphate. This is Pyridoxine 5'-phosphate synthase from Campylobacter jejuni subsp. jejuni serotype O:2 (strain ATCC 700819 / NCTC 11168).